Reading from the N-terminus, the 381-residue chain is Chaperone protein DnaJ (381 aa).

In terms of domain architecture, J spans 4 to 69; the sequence is DYYEILGVAR…EKRARYDQFG (66 aa). A CR-type zinc finger spans residues 139-221; it reads GGEKELRVTR…CGGSGLVRKT (83 aa). Positions 152, 155, 169, 172, 195, 198, 209, and 212 each coordinate Zn(2+). CXXCXGXG motif repeat units lie at residues 152–159, 169–176, 195–202, and 209–216; these read CGHCHGNG, CPTCQGRG, CSTCRGEG, and CRECGGSG.

It belongs to the DnaJ family. Homodimer. It depends on Zn(2+) as a cofactor.

Its subcellular location is the cytoplasm. Participates actively in the response to hyperosmotic and heat shock by preventing the aggregation of stress-denatured proteins and by disaggregating proteins, also in an autonomous, DnaK-independent fashion. Unfolded proteins bind initially to DnaJ; upon interaction with the DnaJ-bound protein, DnaK hydrolyzes its bound ATP, resulting in the formation of a stable complex. GrpE releases ADP from DnaK; ATP binding to DnaK triggers the release of the substrate protein, thus completing the reaction cycle. Several rounds of ATP-dependent interactions between DnaJ, DnaK and GrpE are required for fully efficient folding. Also involved, together with DnaK and GrpE, in the DNA replication of plasmids through activation of initiation proteins. In Carboxydothermus hydrogenoformans (strain ATCC BAA-161 / DSM 6008 / Z-2901), this protein is Chaperone protein DnaJ.